The chain runs to 169 residues: Large ribosomal subunit protein uL10 (169 aa).

It belongs to the universal ribosomal protein uL10 family. As to quaternary structure, part of the ribosomal stalk of the 50S ribosomal subunit. The N-terminus interacts with L11 and the large rRNA to form the base of the stalk. The C-terminus forms an elongated spine to which L12 dimers bind in a sequential fashion forming a multimeric L10(L12)X complex.

In terms of biological role, forms part of the ribosomal stalk, playing a central role in the interaction of the ribosome with GTP-bound translation factors. The polypeptide is Large ribosomal subunit protein uL10 (Onion yellows phytoplasma (strain OY-M)).